The chain runs to 197 residues: MAERKASVARDTLETQIKVSIDLDGTGKARFDTGVPFLDHMMDQIARHGLIDLDIECKGDLHIDDHHTVEDIGITLGQAFAKAIGDKKGIRRYGHAYVPLDEALSRVVIDFSGRPGLQMHVPFTRASVGGFDVDLFMEFFQGFVNHAQVTLHIDNLRGHNTHHQIETVFKAFGRALRMAIELDERMAGQMPSTKGCL.

This sequence belongs to the imidazoleglycerol-phosphate dehydratase family.

The protein resides in the cytoplasm. It catalyses the reaction D-erythro-1-(imidazol-4-yl)glycerol 3-phosphate = 3-(imidazol-4-yl)-2-oxopropyl phosphate + H2O. The protein operates within amino-acid biosynthesis; L-histidine biosynthesis; L-histidine from 5-phospho-alpha-D-ribose 1-diphosphate: step 6/9. This is Imidazoleglycerol-phosphate dehydratase from Pseudomonas aeruginosa (strain LESB58).